Reading from the N-terminus, the 195-residue chain is Probable prefoldin subunit 3 (195 aa).

It belongs to the prefoldin subunit alpha family. As to quaternary structure, heterohexamer of two PFD-alpha type and four PFD-beta type subunits.

In terms of biological role, binds specifically to cytosolic chaperonin (c-CPN) and transfers target proteins to it. Binds to nascent polypeptide chain and promotes folding in an environment in which there are many competing pathways for nonnative proteins. This chain is Probable prefoldin subunit 3 (pfdn3), found in Dictyostelium discoideum (Social amoeba).